Here is a 188-residue protein sequence, read N- to C-terminus: uncharacterized protein (188 aa).

The protein belongs to the isochorismatase family.

This is an uncharacterized protein from Escherichia coli O157:H7.